Consider the following 312-residue polypeptide: HPr kinase/phosphorylase (312 aa).

Active-site residues include H141 and K162. 156 to 163 is a binding site for ATP; sequence GDSGIGKS. S163 is a Mg(2+) binding site. Catalysis depends on D180, which acts as the Proton acceptor; for phosphorylation activity. Proton donor; for dephosphorylation activity. The important for the catalytic mechanism of both phosphorylation and dephosphorylation stretch occupies residues 204–213; the sequence is LEIRGVGIID. E205 is a binding site for Mg(2+). R246 is a catalytic residue. The segment at 267–272 is important for the catalytic mechanism of dephosphorylation; that stretch reads PVRVGR.

It belongs to the HPrK/P family. As to quaternary structure, homohexamer. It depends on Mg(2+) as a cofactor.

It catalyses the reaction [HPr protein]-L-serine + ATP = [HPr protein]-O-phospho-L-serine + ADP + H(+). The enzyme catalyses [HPr protein]-O-phospho-L-serine + phosphate + H(+) = [HPr protein]-L-serine + diphosphate. Catalyzes the ATP- as well as the pyrophosphate-dependent phosphorylation of a specific serine residue in HPr, a phosphocarrier protein of the phosphoenolpyruvate-dependent sugar phosphotransferase system (PTS). HprK/P also catalyzes the pyrophosphate-producing, inorganic phosphate-dependent dephosphorylation (phosphorolysis) of seryl-phosphorylated HPr (P-Ser-HPr). The two antagonistic activities of HprK/P are regulated by several intracellular metabolites, which change their concentration in response to the absence or presence of rapidly metabolisable carbon sources (glucose, fructose, etc.) in the growth medium. Therefore, by controlling the phosphorylation state of HPr, HPrK/P is a sensor enzyme that plays a major role in the regulation of carbon metabolism and sugar transport: it mediates carbon catabolite repression (CCR), and regulates PTS-catalyzed carbohydrate uptake and inducer exclusion. This Pediococcus pentosaceus (strain ATCC 25745 / CCUG 21536 / LMG 10740 / 183-1w) protein is HPr kinase/phosphorylase.